The chain runs to 141 residues: Protein X (141 aa).

Low complexity predominate over residues 24–48; it reads QSSGPPFPRPSAGSAASPASSLSAS. Positions 24-51 are disordered; sequence QSSGPPFPRPSAGSAASPASSLSASDES. The tract at residues 68–113 is mitochondrial targeting sequence; the sequence is PCCLVVTCAELRTMDSTVNFVSWHANRQLGMPSKDLWTPYIRDQLL.

This sequence belongs to the orthohepadnavirus protein X family. In terms of assembly, may form homodimer. May interact with host CEBPA, CFLAR, CREB1, DDB1, E4F1, HBXIP, HSPD1/HSP60, NFKBIA, POLR2E and SMAD4. Interacts with host SMC5-SMC6 complex and induces its degradation. Interacts with host TRPC4AP; leading to prevent ubiquitination of TRPC4AP. Interacts with host PLSCR1; this interaction promotes ubiquitination and degradation of HBx and impairs HBx-mediated cell proliferation. In terms of processing, a fraction may be phosphorylated in insect cells and HepG2 cells, a human hepatoblastoma cell line. Phosphorylated in vitro by host protein kinase C or mitogen-activated protein kinase. N-acetylated in insect cells.

The protein localises to the host cytoplasm. It localises to the host nucleus. Its subcellular location is the host mitochondrion. Functionally, multifunctional protein that plays a role in silencing host antiviral defenses and promoting viral transcription. Does not seem to be essential for HBV infection. May be directly involved in development of cirrhosis and liver cancer (hepatocellular carcinoma). Most of cytosolic activities involve modulation of cytosolic calcium. The effect on apoptosis is controversial depending on the cell types in which the studies have been conducted. May induce apoptosis by localizing in mitochondria and causing loss of mitochondrial membrane potential. May also modulate apoptosis by binding host CFLAR, a key regulator of the death-inducing signaling complex (DISC). Promotes viral transcription by using the host E3 ubiquitin ligase DDB1 to target the SMC5-SMC6 complex to proteasomal degradation. This host complex would otherwise bind to viral episomal DNA, and prevents its transcription. Moderately stimulates transcription of many different viral and cellular transcription elements. Promoters and enhancers stimulated by HBx contain DNA binding sites for NF-kappa-B, AP-1, AP-2, c-EBP, ATF/CREB, or the calcium-activated factor NF-AT. The sequence is that of Protein X from Woodchuck hepatitis B virus (isolate 1) (WHV).